Consider the following 473-residue polypeptide: Protein translocase subunit SecA (473 aa).

Position 127 (D127) interacts with ATP. Residues V424–K447 are disordered. Zn(2+) contacts are provided by C457, C459, C468, and C469.

The protein belongs to the SecA family. Monomer and homodimer. Part of the essential Sec protein translocation apparatus which comprises SecA, SecYEG and auxiliary proteins SecDF. Other proteins may also be involved. Zn(2+) is required as a cofactor.

It localises to the cell membrane. The protein resides in the cytoplasm. The enzyme catalyses ATP + H2O + cellular proteinSide 1 = ADP + phosphate + cellular proteinSide 2.. Its function is as follows. Part of the Sec protein translocase complex. Interacts with the SecYEG preprotein conducting channel. Has a central role in coupling the hydrolysis of ATP to the transfer of proteins into and across the cell membrane, serving as an ATP-driven molecular motor driving the stepwise translocation of polypeptide chains across the membrane. The chain is Protein translocase subunit SecA from Cytobacillus firmus (Bacillus firmus).